A 45-amino-acid polypeptide reads, in one-letter code: Large ribosomal subunit protein bL34 (45 aa).

This sequence belongs to the bacterial ribosomal protein bL34 family.

This chain is Large ribosomal subunit protein bL34, found in Paenarthrobacter aurescens (strain TC1).